The sequence spans 1065 residues: Inversin (1065 aa).

ANK repeat units follow at residues 13–42 (SLASQVHAAAVNGDKGALQRLIVGNSALKD), 47–76 (FGRTPLMYCVLADRLDCADALLKAGADVNK), 80–110 (SQRTALHLAAQKGNYRFMKLLLTRRANWMQK), 113–144 (EEMTPLHLTTRHRSPKCLALLLKFMAPGEVDT), 148–177 (NKQTALHWSAYYNNPEHVKLLIKHDSNIGI), 181–213 (EGKIPLHWAANHKDPSAVHTVRCILDAAPTESL), 220–250 (EGRTPLHFAVADGNVTVVDVLTSYESCNITS), 254–283 (LFRTPLHWAALLGHAQIVHLLLERNKSGTI), 288–317 (QGATPLHYAAQSNFAETVKVFLKHPSVKDD), 321–350 (EGRTSFMWAAGKGSDDVLRTMLSLKSDIDI), 356–385 (YGGTALHAAALSGHVSTVKLLLENNAQVDA), 389–418 (MKHTPLFRACEMGHKDVIQTLIKGGARVDL), 422–451 (DGHSLLHWAALGGNADVCQILIENKINPNV), 455–484 (AGRTPLQCAAYGGYINCMAVLMENNADPNI), 488–517 (EGRTALHWSCNNGYLDAIKLLLDFAAFPNQ), and 523–553 (ERYTPLDYALLGERHEVIQFMLEHGALSIAA). A 3-hydroxyasparagine modification is found at Asn75. The D-box 1 signature appears at 490–498 (RTALHWSCN). The region spanning 555-584 (QDIAAFKIQAVYKGYKVRKAFRDRKNLLMK) is the IQ 1 domain. Positions 589-616 (RKDAAAKKREEENKRKEAEQQKGRRSPD) are enriched in basic and acidic residues. Disordered regions lie at residues 589–833 (RKDA…TPRN) and 847–886 (HLPQSTEELRSGARRLETSTLSEDFQVSKETDPAPGPLSG). The segment covering 627-640 (PSTQDVPSRQSRAP) has biased composition (polar residues). Ser661 is modified (phosphoserine). Residues 677-686 (SSDLQGTNSR) are compositionally biased toward polar residues. Basic and acidic residues-rich tracts occupy residues 687–697 (RPNETAREHSK), 706–715 (RPNEGSDGSR), 723–736 (EKSRGETAGDERCA), 752–762 (GPDEKGEDSRR), 770–786 (HDSHWKPSRRHDTEPKA), and 853–863 (EELRSGARRLE). The D-box 2 motif lies at 909-917 (RKELFRKKN). Residues 916-945 (KNKAAAVIQRAWRSYQLRKHLSHLRHMKQL) form the IQ 2 domain. The segment at 976–999 (TTAVSKAPKSPSKGTSGTKSTKHS) is disordered. Over residues 983-994 (PKSPSKGTSGTK) the composition is skewed to low complexity.

Binds calmodulin via its IQ domains. Interacts with APC2. Interacts with alpha-, beta-, and gamma-catenin. Interacts with N-cadherin (CDH2). Interacts with microtubules. Interacts with NPHP1. Interacts with DVL1, PRICKLE (PRICKLE1 or PRICKLE2) and Strabismus (VANGL1 or VANGL2). Interacts with IQCB1; the interaction likely requires additional interactors. Component of a complex containing at least ANKS6, INVS, NEK8 and NPHP3. ANKS6 may organize complex assembly by linking INVS and NPHP3 to NEK8 and INVS may target the complex to the proximal ciliary axoneme. In terms of processing, may be ubiquitinated via its interaction with APC2. Post-translationally, hydroxylated at Asn-75, most probably by HIF1AN. As to expression, widely expressed. Strongly expressed in the primary cilia of renal tubular cells.

It is found in the cytoplasm. The protein resides in the cytoskeleton. The protein localises to the spindle. Its subcellular location is the membrane. It localises to the nucleus. It is found in the cell projection. The protein resides in the cilium. Functionally, required for normal renal development and establishment of left-right axis. Probably acts as a molecular switch between different Wnt signaling pathways. Inhibits the canonical Wnt pathway by targeting cytoplasmic disheveled (DVL1) for degradation by the ubiquitin-proteasome. This suggests that it is required in renal development to oppose the repression of terminal differentiation of tubular epithelial cells by Wnt signaling. Involved in the organization of apical junctions in kidney cells together with NPHP1, NPHP4 and RPGRIP1L/NPHP8. Does not seem to be strictly required for ciliogenesis. This chain is Inversin (INVS), found in Homo sapiens (Human).